A 255-amino-acid chain; its full sequence is MRHPLVMGNWKLNGSKHMVNDLTAALRNELSSVVGCDVAIAPPVTYLELAKHHLGGSRIALGAQNVDTHLSGAYTGEVSAEMLKDIGAKYIIIGHSERRTYHKESDEFIAEKFAVLKEAELIPVLCIGESEAENEAGQTEAVCARQIDAVLNSLGAKAFENTVIAYEPIWAIGTGKSATPAQAQAVHKFIRDHIAKHDAAIAEQVIIQYGGSVNAANAAELFTQPDIDGALVGGASLKADAFAVIVKAAAEAKQS.

Residue asparagine 9–lysine 11 coordinates substrate. Histidine 95 functions as the Electrophile in the catalytic mechanism. Catalysis depends on glutamate 167, which acts as the Proton acceptor. Residues glycine 173, serine 212, and glycine 233–glycine 234 each bind substrate.

The protein belongs to the triosephosphate isomerase family. In terms of assembly, homodimer.

The protein localises to the cytoplasm. It carries out the reaction D-glyceraldehyde 3-phosphate = dihydroxyacetone phosphate. It participates in carbohydrate biosynthesis; gluconeogenesis. It functions in the pathway carbohydrate degradation; glycolysis; D-glyceraldehyde 3-phosphate from glycerone phosphate: step 1/1. Involved in the gluconeogenesis. Catalyzes stereospecifically the conversion of dihydroxyacetone phosphate (DHAP) to D-glyceraldehyde-3-phosphate (G3P). The polypeptide is Triosephosphate isomerase (Sodalis glossinidius (strain morsitans)).